Here is a 284-residue protein sequence, read N- to C-terminus: Small ribosomal subunit protein uS5 (284 aa).

Residues 1-10 (MMADEKKTPE) are compositionally biased toward basic and acidic residues. Residues 1–105 (MMADEKKTPE…DNRRGGRREE (105 aa)) are disordered. The segment covering 14–23 (ETATPAVAVE) has biased composition (low complexity). Residues 24–43 (DALKAEPTETLEAQKAKAEA) show a composition bias toward basic and acidic residues. Residues 44–67 (ETPAVAETPSEAAANQSAAQGAEG) are compositionally biased toward low complexity. A compositionally biased stretch (basic and acidic residues) spans 68-105 (QPRERGGHDRGGRGGRGGNDRGRGRGGRDNRRGGRREE). One can recognise an S5 DRBM domain in the interval 110–173 (IIEKLVHINR…AAARKKMIRV (64 aa)). The tract at residues 246–284 (DQTSPKSVAQRRGKKVADLLGRGGASEAEAEADAAAIAE) is disordered.

Belongs to the universal ribosomal protein uS5 family. In terms of assembly, part of the 30S ribosomal subunit. Contacts proteins S4 and S8.

Functionally, with S4 and S12 plays an important role in translational accuracy. Its function is as follows. Located at the back of the 30S subunit body where it stabilizes the conformation of the head with respect to the body. This chain is Small ribosomal subunit protein uS5, found in Erythrobacter litoralis (strain HTCC2594).